We begin with the raw amino-acid sequence, 871 residues long: Probable receptor-like protein kinase At2g21480 (871 aa).

A signal peptide spans 1–39 (MEIRKKPNIPMCLVLDSSSRPFMTLLFTILLFLTGLASA). The Extracellular portion of the chain corresponds to 40-439 (VGAVGGSPTA…GQRASMGKQG (400 aa)). N-linked (GlcNAc...) asparagine glycosylation is found at Asn169, Asn182, Asn253, Asn316, and Asn381. Residues 440–460 (MVATAGFVMMFGAFVGLGAMV) traverse the membrane as a helical segment. Topologically, residues 461–871 (YKWKKRPQDW…FTQFASLNGR (411 aa)) are cytoplasmic. Residues 525–797 (FDASEIIGVG…GDVLWNLEYA (273 aa)) form the Protein kinase domain. ATP contacts are provided by residues 531-539 (IGVGGFGNV) and Lys553. Asp649 serves as the catalytic Proton acceptor. The tract at residues 808–871 (KAEAEEVETP…FTQFASLNGR (64 aa)) is disordered. The segment covering 817–839 (PKPVAVPAAAPTSPAATTAAASE) has biased composition (low complexity). Positions 854–871 (DQHSGTTMFTQFASLNGR) are enriched in polar residues.

The protein belongs to the protein kinase superfamily. Ser/Thr protein kinase family.

The protein localises to the membrane. The protein is Probable receptor-like protein kinase At2g21480 of Arabidopsis thaliana (Mouse-ear cress).